We begin with the raw amino-acid sequence, 100 residues long: Large ribosomal subunit protein uL23 (100 aa).

This sequence belongs to the universal ribosomal protein uL23 family. In terms of assembly, part of the 50S ribosomal subunit. Contacts protein L29, and trigger factor when it is bound to the ribosome.

In terms of biological role, one of the early assembly proteins it binds 23S rRNA. One of the proteins that surrounds the polypeptide exit tunnel on the outside of the ribosome. Forms the main docking site for trigger factor binding to the ribosome. This is Large ribosomal subunit protein uL23 from Shewanella oneidensis (strain ATCC 700550 / JCM 31522 / CIP 106686 / LMG 19005 / NCIMB 14063 / MR-1).